The following is a 903-amino-acid chain: Translation initiation factor IF-2 (903 aa).

Residues 66–296 (QATLKGEGPV…GRSRKREMEN (231 aa)) are disordered. Positions 121–132 (NTDETRVQEHKP) are enriched in basic and acidic residues. 2 stretches are compositionally biased toward low complexity: residues 139–152 (AGDAPAAEGTAAAG) and 178–195 (AATGQRAQGGEAGRGQQS). The span at 204–231 (EGRSRQDENKGSAREDQANRFATRDKEA) shows a compositional bias: basic and acidic residues. Residues 246–255 (RRPAHSKPLR) show a composition bias toward basic residues. 2 stretches are compositionally biased toward basic and acidic residues: residues 263–276 (VTKDLPEKRRDRSN) and 285–296 (ESGRSRKREMEN). Residues 403–572 (ERPPVVTVMG…LLTADVAELK (170 aa)) enclose the tr-type G domain. Residues 412 to 419 (GHVDHGKT) form a G1 region. Residue 412 to 419 (GHVDHGKT) participates in GTP binding. Residues 437-441 (GITQH) form a G2 region. Residues 458–461 (DTPG) form a G3 region. Residues 458-462 (DTPGH) and 512-515 (NKID) contribute to the GTP site. Residues 512-515 (NKID) are G4. The G5 stretch occupies residues 548-550 (SAV).

Belongs to the TRAFAC class translation factor GTPase superfamily. Classic translation factor GTPase family. IF-2 subfamily.

The protein localises to the cytoplasm. One of the essential components for the initiation of protein synthesis. Protects formylmethionyl-tRNA from spontaneous hydrolysis and promotes its binding to the 30S ribosomal subunits. Also involved in the hydrolysis of GTP during the formation of the 70S ribosomal complex. The protein is Translation initiation factor IF-2 of Moorella thermoacetica (strain ATCC 39073 / JCM 9320).